The sequence spans 314 residues: Dihydroorotate dehydrogenase (fumarate) (314 aa).

Residues Lys-46, 70–74 (NSMGL), and Asn-130 contribute to the substrate site. 46–47 (KS) is a binding site for FMN. Asn-130 lines the FMN pocket. Residues Ser-132 and Cys-133 each act as nucleophile in the active site. Lys-167 and Ile-195 together coordinate FMN. 196-197 (NS) contacts substrate. Residues Gly-224, 252–253 (GG), and 274–275 (GT) each bind FMN.

It belongs to the dihydroorotate dehydrogenase family. Type 1 subfamily. In terms of assembly, homodimer. Requires FMN as cofactor.

It is found in the cytoplasm. It carries out the reaction (S)-dihydroorotate + fumarate = orotate + succinate. It functions in the pathway pyrimidine metabolism; UMP biosynthesis via de novo pathway. The activity is independent of the presence of oxygen. Catalyzes the conversion of dihydroorotate to orotate with fumarate as the electron acceptor. This chain is Dihydroorotate dehydrogenase (fumarate) (URA1), found in Lachancea kluyveri (strain ATCC 58438 / CBS 3082 / BCRC 21498 / NBRC 1685 / JCM 7257 / NCYC 543 / NRRL Y-12651) (Yeast).